We begin with the raw amino-acid sequence, 125 residues long: MYSNLKSIGVVNYDNIDKYTLRQEGDTDILKIYFRKASRQFLAKSLKFKFPRQRKKISQDHGSSGFRNVSEIGSTLRYVLKELDSLTEHVKEEKELKVQVLEDLKHLESVVASKIKEIERKLEQM.

It belongs to the UPF0325 family.

This Psychromonas ingrahamii (strain DSM 17664 / CCUG 51855 / 37) protein is UPF0325 protein Ping_0715.